The chain runs to 350 residues: 3-isopropylmalate dehydrogenase (350 aa).

76 to 87 (GPKWDNAPKRPE) is a binding site for NAD(+). Positions 94, 104, 132, and 217 each coordinate substrate. Positions 217, 241, and 245 each coordinate Mg(2+). Residue 275-287 (GSAPDIANQNIAN) participates in NAD(+) binding.

Belongs to the isocitrate and isopropylmalate dehydrogenases family. LeuB type 1 subfamily. Homodimer. Mg(2+) is required as a cofactor. It depends on Mn(2+) as a cofactor.

It localises to the cytoplasm. The catalysed reaction is (2R,3S)-3-isopropylmalate + NAD(+) = 4-methyl-2-oxopentanoate + CO2 + NADH. The protein operates within amino-acid biosynthesis; L-leucine biosynthesis; L-leucine from 3-methyl-2-oxobutanoate: step 3/4. Its function is as follows. Catalyzes the oxidation of 3-carboxy-2-hydroxy-4-methylpentanoate (3-isopropylmalate) to 3-carboxy-4-methyl-2-oxopentanoate. The product decarboxylates to 4-methyl-2 oxopentanoate. This is 3-isopropylmalate dehydrogenase from Listeria monocytogenes serotype 4b (strain F2365).